The primary structure comprises 1158 residues: Adipocyte enhancer-binding protein 1 (1158 aa).

A signal peptide spans M1–P25. The disordered stretch occupies residues F41–P387. Over residues L45–E55 the composition is skewed to acidic residues. Basic and acidic residues predominate over residues D100–L110. Residues P116–S166 show a composition bias toward basic residues. Positions P182 to E192 are enriched in pro residues. Over residues E193–L202 the composition is skewed to low complexity. Positions E211–E223 are enriched in basic and acidic residues. The segment covering R252 to P266 has biased composition (basic residues). Residues E267–P289 are compositionally biased toward basic and acidic residues. Over residues P290–P300 the composition is skewed to pro residues. Positions P326–E371 are enriched in basic and acidic residues. The 158-residue stretch at V383 to C540 folds into the F5/8 type C domain. Positions M390–V555 are required for DNA-binding and interaction with NFKBIA. Residues T421–I624 form an interaction with MAPK1 and MAPK3 region. N-linked (GlcNAc...) asparagine glycosylation is present at N528. Positions V555–S985 are interaction with PTEN. The region spanning R563 to V904 is the Peptidase M14 domain. N922 carries an N-linked (GlcNAc...) asparagine glycan. Positions D941–F1158 are required for transcriptional repression. Positions D1006–F1158 are interaction with MAPK1 and MAPK3. Residues E1108 to I1137 are compositionally biased toward acidic residues. The interval E1108–Q1141 is disordered.

It belongs to the peptidase M14 family. As to quaternary structure, isoform 1: Interacts with different types of collagen, including collagens I, III, and V. Isoform 2: Interacts with GNG5, NFKBIA, MAPK1, MAPK3 and PTEN. Interaction with MAPK1 may stimulate DNA-binding. May interact with calmodulin. Binds to DNA in vitro. Phosphorylated by MAPK1 in vitro. As to expression, expressed in osteoblast and visceral fat.

It is found in the secreted. The protein localises to the cytoplasm. Its subcellular location is the nucleus. As a positive regulator of collagen fibrillogenesis, it is probably involved in the organization and remodeling of the extracellular matrix. Its function is as follows. May positively regulate MAP-kinase activity in adipocytes, leading to enhanced adipocyte proliferation and reduced adipocyte differentiation. May also positively regulate NF-kappa-B activity in macrophages by promoting the phosphorylation and subsequent degradation of I-kappa-B-alpha (NFKBIA), leading to enhanced macrophage inflammatory responsiveness. Can act as a transcriptional repressor. This is Adipocyte enhancer-binding protein 1 (AEBP1) from Homo sapiens (Human).